Consider the following 865-residue polypeptide: MNDETNKNNSNINNNNNNNNSSALVLVDNVRYDKAIIRPLPTKAYYGLEYPANVQNADKAIESVGGLSKISNVIKSREKEYLQLKFRPNNPTCKPTFGTKSPTCHLLLRVRPNKQQTQTQTQTQTQDNNEEMNSPKPTIQSPKTTSRSKQQQQQQQPQENEKFDATIIALVPSTIRFDGLCDFQYLIKSDNNNTKSESDNVNDSSSSSSSKTVPITKQKDQYYVQQYSDNNEIMKDEPMNLIPPLFSRIDFPQNYLFKANPNAQFDKTSKQFVFAKQTTRKATGHAKFNNVIPVAPQELPKVFGVNELMKKTRDILVALFEKRPIWLYISLLDKVQKEGGLVAHTKRVLPSLAFNFVDGPWRKCWVKLGFDPRIHPETSQYQTIDFRISEQDNHYPSNQPSKNNNNNNNNKDSIKNKEKDNSNKEDKEHKEDKEDKQEEDKENNETDNNEKSNKIDEESRDNTKNTDGGEDKNNKNIVEKKNNNEKGDDNNIDDGDEIMKNKEDENGEGNNNNNNNNNNKEGVSEVQKLGRGHKDEKLIIQNGVSGETKINPSRKKLLDINTFEFNSQLPTSSSSLSSSSTQPLLLLKGGSGDDAQDFYQAPVYDYTFKTAPSMLSNLYQIIDIEEPSIAEYWASVKIQSTCQKKFGWFSESSFREGLERMKARFGVMDNKMRFKSRSNTSTATTTSTKSTQPKSTQPKEPKLKSTQPKEPRPKGRPRKYAIKKDKNNNNNVDNNNDDSIDKMDLDDEETTTKSNKQNKEIDESLKNDTLAQMEKDNEYLHGKNEEIEIEIDGGVVGGFDYDDDDDDEDKPFELLDDFDGTDNIQMKQIDDFFGTQTNEDSEEDESDFDEEEEEEEEDFEFEESE.

5 disordered regions span residues 1-21 (MNDE…NNNS), 111-163 (RPNK…NEKF), 191-215 (NNNT…TVPI), 391-522 (QDNH…NKEG), and 669-865 (DNKM…EESE). Low complexity-rich tracts occupy residues 7–21 (KNNS…NNNS), 115–126 (QQTQTQTQTQTQ), 140–158 (QSPK…QQPQ), 199–210 (DNVNDSSSSSSS), and 401–411 (SKNNNNNNNNK). 2 stretches are compositionally biased toward basic and acidic residues: residues 412–439 (DSIK…KQEE) and 448–489 (NNEK…KGDD). Low complexity-rich tracts occupy residues 508-521 (EGNN…NNKE) and 677-696 (RSNT…PKST). Composition is skewed to basic and acidic residues over residues 697-713 (QPKE…EPRP), 757-766 (QNKEIDESLK), and 773-786 (MEKD…KNEE). 2 stretches are compositionally biased toward acidic residues: residues 800–820 (DYDD…DFDG) and 839–865 (EDSE…EESE).

Belongs to the TFIIIC subunit 5 family. Part of the TFIIIC complex.

The protein localises to the nucleus. Involved in RNA polymerase III-mediated transcription. Integral, tightly associated component of the DNA-binding TFIIIC2 subcomplex that directly binds tRNA and virus-associated RNA promoters. In Dictyostelium discoideum (Social amoeba), this protein is General transcription factor 3C polypeptide 5 (gtf3c5).